The chain runs to 476 residues: Glycogen synthase (476 aa).

Lys15 provides a ligand contact to ADP-alpha-D-glucose.

The protein belongs to the glycosyltransferase 1 family. Bacterial/plant glycogen synthase subfamily.

The catalysed reaction is [(1-&gt;4)-alpha-D-glucosyl](n) + ADP-alpha-D-glucose = [(1-&gt;4)-alpha-D-glucosyl](n+1) + ADP + H(+). Its pathway is glycan biosynthesis; glycogen biosynthesis. In terms of biological role, synthesizes alpha-1,4-glucan chains using ADP-glucose. In Haemophilus influenzae (strain 86-028NP), this protein is Glycogen synthase.